Reading from the N-terminus, the 176-residue chain is Flavodoxin (176 aa).

The Flavodoxin-like domain maps to 4–165 (IGIFFGSDTG…RVEKWVKQVA (162 aa)).

It belongs to the flavodoxin family. FMN serves as cofactor.

Its function is as follows. Low-potential electron donor to a number of redox enzymes. The sequence is that of Flavodoxin (fldA) from Klebsiella pneumoniae.